The primary structure comprises 619 residues: Alpha-(1,6)-fucosyltransferase (619 aa).

Topologically, residues 1 to 17 (MLLVRQLFGASANSWAR) are cytoplasmic. Residues 18–38 (ALIIFVLAWIGLVYVFVVKLT) traverse the membrane as a helical; Signal-anchor for type II membrane protein segment. The Lumenal portion of the chain corresponds to 39–619 (NTQGQQAAGE…TAKLPLYAGI (581 aa)). 3 disulfide bridges follow: Cys253–Cys315, Cys261–Cys279, and Cys267–Cys271. One can recognise a GT23 domain in the interval 255 to 539 (NARKLVCKLN…PDAAHRFKSL (285 aa)). The SH3-binding signature appears at 345–351 (PRPPYLP). The segment at 411–412 (RR) is important for donor substrate binding. Cys511 and Cys518 are disulfide-bonded. Positions 548–609 (QNAHNRRVVI…PSFKVEEKVD (62 aa)) constitute an SH3 domain.

This sequence belongs to the glycosyltransferase 23 family. The cofactor is Mn(2+). Mg(2+) serves as cofactor.

It localises to the golgi apparatus. Its subcellular location is the golgi stack membrane. The enzyme catalyses N(4)-{beta-D-GlcNAc-(1-&gt;2)-alpha-D-Man-(1-&gt;3)-[beta-D-GlcNAc-(1-&gt;2)-alpha-D-Man-(1-&gt;6)]-beta-D-Man-(1-&gt;4)-beta-D-GlcNAc-(1-&gt;4)-beta-D-GlcNAc}-L-asparaginyl-[protein] + GDP-beta-L-fucose = an N(4)-{beta-D-GlcNAc-(1-&gt;2)-alpha-D-Man-(1-&gt;3)-[beta-D-GlcNAc-(1-&gt;2)-alpha-D-Man-(1-&gt;6)]-beta-D-Man-(1-&gt;4)-beta-D-GlcNAc-(1-&gt;4)-[alpha-L-Fuc-(1-&gt;6)]-beta-D-GlcNAc}-L-asparaginyl-[protein] + GDP + H(+). Its pathway is protein modification; protein glycosylation. Functionally, catalyzes the addition of fucose in alpha 1-6 linkage to the first GlcNAc residue, next to the peptide chains in N-glycans. The addition is prevented if the GlcNAc residue is already fucosylated. This chain is Alpha-(1,6)-fucosyltransferase (FucT6), found in Drosophila melanogaster (Fruit fly).